A 308-amino-acid chain; its full sequence is Formamidopyrimidine-DNA glycosylase (308 aa).

Catalysis depends on proline 2, which acts as the Schiff-base intermediate with DNA. Glutamate 3 serves as the catalytic Proton donor. The active-site Proton donor; for beta-elimination activity is lysine 61. Histidine 100, arginine 120, and arginine 181 together coordinate DNA. An FPG-type zinc finger spans residues 267 to 301; it reads AVYGQEGRPCPRCGALVRRDAFMNRSSFSCPVCQP. Arginine 291 (proton donor; for delta-elimination activity) is an active-site residue.

It belongs to the FPG family. Monomer. The cofactor is Zn(2+).

The catalysed reaction is Hydrolysis of DNA containing ring-opened 7-methylguanine residues, releasing 2,6-diamino-4-hydroxy-5-(N-methyl)formamidopyrimidine.. It catalyses the reaction 2'-deoxyribonucleotide-(2'-deoxyribose 5'-phosphate)-2'-deoxyribonucleotide-DNA = a 3'-end 2'-deoxyribonucleotide-(2,3-dehydro-2,3-deoxyribose 5'-phosphate)-DNA + a 5'-end 5'-phospho-2'-deoxyribonucleoside-DNA + H(+). Its function is as follows. Involved in base excision repair of DNA damaged by oxidation or by mutagenic agents. Acts as a DNA glycosylase that recognizes and removes damaged bases. Has a preference for oxidized purines, such as 7,8-dihydro-8-oxoguanine (8-oxoG). Has AP (apurinic/apyrimidinic) lyase activity and introduces nicks in the DNA strand. Cleaves the DNA backbone by beta-delta elimination to generate a single-strand break at the site of the removed base with both 3'- and 5'-phosphates. The polypeptide is Formamidopyrimidine-DNA glycosylase (Kineococcus radiotolerans (strain ATCC BAA-149 / DSM 14245 / SRS30216)).